A 374-amino-acid chain; its full sequence is Transcription termination factor 1, mitochondrial (374 aa).

The N-terminal 37 residues, 1 to 37 (MASRNIWRVRRNFLFDLRGWVPQYSAEVFLKSIPFRP), are a transit peptide targeting the mitochondrion. Interaction with DNA regions lie at residues 146 to 147 (RS), 224 to 228 (QSTKR), 301 to 308 (SEKKFNDK), 332 to 335 (SIHT), and 361 to 368 (SQRRYEAK).

It belongs to the mTERF family. In terms of assembly, monomer. In terms of processing, is a phosphoprotein. While the DNA-binding activity is unaffected by the phosphorylation/dephosphorylation state, only the phosphorylated form of the protein is active for termination activity. Functioning seems to be regulated by phosphorylation.

It is found in the mitochondrion. Its function is as follows. Transcription termination factor. Binds to a 28 bp region within the tRNA(Leu(uur)) gene at a position immediately adjacent to and downstream of the 16S rRNA gene; this region comprises a tridecamer sequence critical for directing accurate termination. Binds DNA along the major grove and promotes DNA bending and partial unwinding. Promotes base flipping. Transcription termination activity appears to be polarized with highest specificity for transcripts initiated on the light strand. This chain is Transcription termination factor 1, mitochondrial (Mterf1), found in Rattus norvegicus (Rat).